The sequence spans 867 residues: MGRGPPAVLAPWMLFLSLAQANFAPHFFDNGAGSTNGNMALFSLPEDTPVGSHVYTLNGTDPEGDPVSYHISFNPSARSVFSVDPNLGNITLIEELDREREDEIEAIISISDGLNLVAEKVTILVTDANDEAPRFIQEPYVVQVPEDTPSGSSIARVRAVDRDTGSAGSVTYFLKNPHPTEFSVDRHSGVLRLRAGAILDFEKARAHFVTVVAKDGGGKLRGADVVLSATTVVTVNVEDVQDMGPVFVGTPYYGYVYEDTLPGSEVLMVVAMDGDRGKPNRVLYSLVNGSDGAFEINETSGAISVMQSPSQLRREVYELHVQVTEVSSAGTPAAQAMVPVTIRIVDLNNHPPTFYGESGPQNRFELSMYEHPPQGEILRGLKITVNDSDQGANAKFNLRLVGPGGIFRVVPQTVLNEAQVTIIVENSAAIDFEKSKVLTFKLLAIEVNTPEKFSSTADVVIQLLDTNDNVPKFTSHYYVARIPENAPGGSNVLAVTAVDPDSGPWGEVKYSIYGSGADLFLIHPSSGIIYTQPWASLDAEATARYNFYVKAEDMEGRYSLAEVFITLLDVNDHYPQFGKSVQEKTMVLGTPVKIEATDQDAEEPNNLVDYSITHAEPANVFDINAHTGEIWLKNSIRSLDALHNITPSGDRTWSLEVQAKDRGSPSFSTTALLKIDIVDTEMLSRSPMAAFLMQTKDNPMKAVGVLAGIMAIIVAITVLISTATFWRNKKSNKVQPVRRVLRKRPSPAPRSVRIEWLKFRRTKAADKFVLREAPPNENCNNNSRGSTPAPQAPAPPPPPSPAPSVGQAPWTVPTVSGSLAPQQPQQPSPKPRAVAKRKAVGSPVQSALVSELRQKFEKKNLHSKAYF.

Positions 1–21 (MGRGPPAVLAPWMLFLSLAQA) are cleaved as a signal peptide. Topologically, residues 22–701 (NFAPHFFDNG…LMQTKDNPMK (680 aa)) are extracellular. Cadherin domains follow at residues 36 to 135 (NGNM…APRF), 136 to 247 (IQEP…GPVF), 248 to 354 (VGTP…PPTF), 360 to 473 (PQNR…VPKF), 474 to 577 (TSHY…YPQF), and 574 to 689 (YPQF…SPMA). 2 N-linked (GlcNAc...) asparagine glycosylation sites follow: Asn58 and Asn89. N-linked (GlcNAc...) asparagine glycans are attached at residues Asn288 and Asn297. Residues 702-722 (AVGVLAGIMAIIVAITVLIST) traverse the membrane as a helical segment. The Cytoplasmic segment spans residues 723–867 (ATFWRNKKSN…KKNLHSKAYF (145 aa)). The interval 767 to 843 (KFVLREAPPN…VAKRKAVGSP (77 aa)) is disordered. A compositionally biased stretch (polar residues) spans 777 to 786 (ENCNNNSRGS). Pro residues predominate over residues 790-802 (PQAPAPPPPPSPA).

In terms of assembly, interacts with PROM1. Post-translationally, undergoes proteolytic cleavage; produces a soluble 95 kDa N-terminal fragment and a 25 kDa cell-associated C-terminal fragment. As to expression, expressed in photoreceptor cells of the outer nuclear layer of the retina.

It is found in the cell membrane. Potential calcium-dependent cell-adhesion protein. May be required for the structural integrity of the outer segment (OS) of photoreceptor cells. In Bos taurus (Bovine), this protein is Cadherin-related family member 1 (CDHR1).